Here is a 382-residue protein sequence, read N- to C-terminus: D-galactonate dehydratase (382 aa).

Asp183 is a Mg(2+) binding site. His185 serves as the catalytic Proton donor. The Mg(2+) site is built by Glu209 and Glu235. Catalysis depends on His285, which acts as the Proton acceptor.

This sequence belongs to the mandelate racemase/muconate lactonizing enzyme family. GalD subfamily. Mg(2+) is required as a cofactor.

It catalyses the reaction D-galactonate = 2-dehydro-3-deoxy-D-galactonate + H2O. Its pathway is carbohydrate acid metabolism; D-galactonate degradation; D-glyceraldehyde 3-phosphate and pyruvate from D-galactonate: step 1/3. Catalyzes the dehydration of D-galactonate to 2-keto-3-deoxy-D-galactonate. The protein is D-galactonate dehydratase of Salmonella dublin (strain CT_02021853).